Reading from the N-terminus, the 222-residue chain is MRFEGLIGARILKRINRFAVQIDVEGRTELAHLHDPGRLLEIVYPGNEVLVRRTDGPKLKWRIEFGKINGRYVLIDSGLHSDIARRFLPEGAVPEVRVGRKRIDFRYGDDYIEVKGCTLMANGIAMFPDAPTKRGLEHLKTLETLASSGYRSHVMMIITRDDVRCFYPNFETDPKFAEAFLRLVPAYVKAHFLTFGFDGLYLRYAGSIGLCADVGHGTNGRL.

Belongs to the SfsA family.

The protein is Sugar fermentation stimulation protein homolog of Thermoplasma acidophilum (strain ATCC 25905 / DSM 1728 / JCM 9062 / NBRC 15155 / AMRC-C165).